Consider the following 284-residue polypeptide: Acetylglutamate kinase (284 aa).

Substrate is bound by residues 66 to 67, arginine 88, and asparagine 179; that span reads GG.

It belongs to the acetylglutamate kinase family. ArgB subfamily.

It is found in the cytoplasm. The enzyme catalyses N-acetyl-L-glutamate + ATP = N-acetyl-L-glutamyl 5-phosphate + ADP. It functions in the pathway amino-acid biosynthesis; L-arginine biosynthesis; N(2)-acetyl-L-ornithine from L-glutamate: step 2/4. Functionally, catalyzes the ATP-dependent phosphorylation of N-acetyl-L-glutamate. The polypeptide is Acetylglutamate kinase (Actinobacillus pleuropneumoniae serotype 3 (strain JL03)).